The following is a 416-amino-acid chain: Glutamyl-tRNA reductase (416 aa).

Residues 49 to 52, Ser105, 110 to 112, and Gln116 each bind substrate; these read TCNR and EPQ. The active-site Nucleophile is the Cys50. Residue 185-190 coordinates NADP(+); sequence GAGETI.

Belongs to the glutamyl-tRNA reductase family. As to quaternary structure, homodimer.

It catalyses the reaction (S)-4-amino-5-oxopentanoate + tRNA(Glu) + NADP(+) = L-glutamyl-tRNA(Glu) + NADPH + H(+). The protein operates within porphyrin-containing compound metabolism; protoporphyrin-IX biosynthesis; 5-aminolevulinate from L-glutamyl-tRNA(Glu): step 1/2. Its function is as follows. Catalyzes the NADPH-dependent reduction of glutamyl-tRNA(Glu) to glutamate 1-semialdehyde (GSA). The sequence is that of Glutamyl-tRNA reductase from Shewanella oneidensis (strain ATCC 700550 / JCM 31522 / CIP 106686 / LMG 19005 / NCIMB 14063 / MR-1).